Consider the following 156-residue polypeptide: Small ribosomal subunit protein uS7 (156 aa).

Belongs to the universal ribosomal protein uS7 family. Part of the 30S ribosomal subunit. Contacts proteins S9 and S11.

In terms of biological role, one of the primary rRNA binding proteins, it binds directly to 16S rRNA where it nucleates assembly of the head domain of the 30S subunit. Is located at the subunit interface close to the decoding center, probably blocks exit of the E-site tRNA. In Herminiimonas arsenicoxydans, this protein is Small ribosomal subunit protein uS7.